Consider the following 97-residue polypeptide: uncharacterized protein (97 aa).

This is an uncharacterized protein from Escherichia coli (strain K12).